We begin with the raw amino-acid sequence, 277 residues long: Glutamate racemase (277 aa).

Substrate contacts are provided by residues 9 to 10 (DS) and 41 to 42 (YG). The active-site Proton donor/acceptor is C73. 74–75 (NT) serves as a coordination point for substrate. Catalysis depends on C183, which acts as the Proton donor/acceptor. 184-185 (TH) serves as a coordination point for substrate.

It belongs to the aspartate/glutamate racemases family.

It catalyses the reaction L-glutamate = D-glutamate. It functions in the pathway cell wall biogenesis; peptidoglycan biosynthesis. Its function is as follows. Provides the (R)-glutamate required for cell wall biosynthesis. This is Glutamate racemase from Shewanella denitrificans (strain OS217 / ATCC BAA-1090 / DSM 15013).